Reading from the N-terminus, the 328-residue chain is Sulfate adenylyltransferase subunit 2 (328 aa).

The tract at residues 305 to 328 is disordered; sequence ERQGRVIDRDSTGSMERKKAEGYF.

Belongs to the PAPS reductase family. CysD subfamily. As to quaternary structure, heterodimer composed of CysD, the smaller subunit, and CysN.

The catalysed reaction is sulfate + ATP + H(+) = adenosine 5'-phosphosulfate + diphosphate. It functions in the pathway sulfur metabolism; hydrogen sulfide biosynthesis; sulfite from sulfate: step 1/3. Its function is as follows. With CysN forms the ATP sulfurylase (ATPS) that catalyzes the adenylation of sulfate producing adenosine 5'-phosphosulfate (APS) and diphosphate, the first enzymatic step in sulfur assimilation pathway. APS synthesis involves the formation of a high-energy phosphoric-sulfuric acid anhydride bond driven by GTP hydrolysis by CysN coupled to ATP hydrolysis by CysD. In Rhodopseudomonas palustris (strain BisB18), this protein is Sulfate adenylyltransferase subunit 2.